The primary structure comprises 346 residues: Phosphoribosylformylglycinamidine cyclo-ligase (346 aa).

This sequence belongs to the AIR synthase family.

Its subcellular location is the cytoplasm. It catalyses the reaction 2-formamido-N(1)-(5-O-phospho-beta-D-ribosyl)acetamidine + ATP = 5-amino-1-(5-phospho-beta-D-ribosyl)imidazole + ADP + phosphate + H(+). It participates in purine metabolism; IMP biosynthesis via de novo pathway; 5-amino-1-(5-phospho-D-ribosyl)imidazole from N(2)-formyl-N(1)-(5-phospho-D-ribosyl)glycinamide: step 2/2. The protein is Phosphoribosylformylglycinamidine cyclo-ligase of Geobacillus thermodenitrificans (strain NG80-2).